The primary structure comprises 240 residues: MSAPLSLFVTGTDTEIGKTFVSAALLHGFARAGLRAAAMKPVAAGAYERDGAWRNEDADQLDAAANVALPAAIRTPFLLKAPAAPHIVAAREGVALDIGTIVDAHRRACEMADVIVVEGVGGFRVPLADTRDTADLAVALGLPVVLVVGVRLGCISHALLTAEAIAARGLPLAGWVANRIDPAMPFADDNVDTLRAWLEREHRAPLLGALAHMSPPSPDAASHALDVNLLLNALRAAAPR.

15–20 (EIGKTF) is a binding site for ATP. Threonine 19 lines the Mg(2+) pocket. Residue lysine 40 is part of the active site. Residues aspartate 57, 118–121 (EGVG), and 178–179 (NR) contribute to the ATP site. Mg(2+) is bound by residues aspartate 57 and glutamate 118.

This sequence belongs to the dethiobiotin synthetase family. Homodimer. Mg(2+) serves as cofactor.

The protein localises to the cytoplasm. The enzyme catalyses (7R,8S)-7,8-diammoniononanoate + CO2 + ATP = (4R,5S)-dethiobiotin + ADP + phosphate + 3 H(+). The protein operates within cofactor biosynthesis; biotin biosynthesis; biotin from 7,8-diaminononanoate: step 1/2. Its function is as follows. Catalyzes a mechanistically unusual reaction, the ATP-dependent insertion of CO2 between the N7 and N8 nitrogen atoms of 7,8-diaminopelargonic acid (DAPA, also called 7,8-diammoniononanoate) to form a ureido ring. This Burkholderia pseudomallei (strain 1106a) protein is ATP-dependent dethiobiotin synthetase BioD.